Reading from the N-terminus, the 161-residue chain is MATKKNEQIKGRTDGLVAENRRSRREYSVEDTLEAGIMLVGSEVKSLREGRANIAESYASVEQGELWLINAEIQTYGGANRFNHEPRRKRKLLVSRRELSKLSQEVERAGRTIVPLKLYFNDKGRAKLLIGVATGRKAHDKREHEAKRDWARDKARIMKAG.

The segment at Met-1 to Ser-23 is disordered.

It belongs to the SmpB family.

Its subcellular location is the cytoplasm. Its function is as follows. Required for rescue of stalled ribosomes mediated by trans-translation. Binds to transfer-messenger RNA (tmRNA), required for stable association of tmRNA with ribosomes. tmRNA and SmpB together mimic tRNA shape, replacing the anticodon stem-loop with SmpB. tmRNA is encoded by the ssrA gene; the 2 termini fold to resemble tRNA(Ala) and it encodes a 'tag peptide', a short internal open reading frame. During trans-translation Ala-aminoacylated tmRNA acts like a tRNA, entering the A-site of stalled ribosomes, displacing the stalled mRNA. The ribosome then switches to translate the ORF on the tmRNA; the nascent peptide is terminated with the 'tag peptide' encoded by the tmRNA and targeted for degradation. The ribosome is freed to recommence translation, which seems to be the essential function of trans-translation. This chain is SsrA-binding protein, found in Hyphomonas neptunium (strain ATCC 15444).